We begin with the raw amino-acid sequence, 1059 residues long: Mitogen-activated protein kinase kinase kinase mlk-1 (1059 aa).

The disordered stretch occupies residues 1-66; sequence MEQASVPSYV…ESSQVSRESP (66 aa). The span at 38-48 shows a compositional bias: low complexity; sequence DTTTASTSTDS. One can recognise an SH3 domain in the interval 69–130; the sequence is RASKAFVASY…PSNYAREVTY (62 aa). The Protein kinase domain occupies 150 to 454; that stretch reads TLSDCQIGHG…TLAISFKQYA (305 aa). Residues 156-164 and K193 each bind ATP; that span reads IGHGATATV. The stretch at 199 to 224 forms a coiled coil; that stretch reads ASNFRADVVSTDEQLEQLKREANLVN. Residue D297 is the Proton acceptor of the active site. S355 carries the phosphoserine; by max-2 and tpa-1 modification. 2 disordered regions span residues 617 to 699 and 714 to 808; these read PVVS…QTTR and RAQS…SSSD. Residues 623–633 are compositionally biased toward polar residues; sequence MDDSNTFSTID. Basic and acidic residues-rich tracts occupy residues 639 to 648 and 662 to 674; these read DPNHSKESKK and NKRD…DERA. A compositionally biased stretch (low complexity) spans 678–689; the sequence is SISSRSSSTTSS. Polar residues predominate over residues 690–699; that stretch reads NRLITGQTTR. Over residues 749 to 759 the composition is skewed to basic and acidic residues; that stretch reads RYVKDLEKDTP. Polar residues-rich tracts occupy residues 774 to 790 and 798 to 808; these read LDQT…SINN and SRRTTANSSSD. The short motif at 937–940 is the NPQY motif element; sequence NPQY. Residue Y940 is modified to Phosphotyrosine.

It belongs to the protein kinase superfamily. STE Ser/Thr protein kinase family. MAP kinase kinase kinase subfamily. In terms of assembly, interacts with max-2; the interaction is independent of max-2 and mlk-1 kinase activities. May interact (via NPQY motif when phosphorylated on tyrosine residue) with shc-1 (via PID domain); the interaction may facilitate mek-1 phosphorylation by bringing mlk-1 and mek-1 together. Interacts with svh-2 (via cytoplasmic domain). Interacts with tpa-1. Mg(2+) serves as cofactor. In terms of processing, may be phosphorylated on tyrosine residues by svh-2. May be ubiquitinated and targeted for proteasomal degradation by E3 ubiquitin ligase rpm-1. Expressed in pharynx, intestine, hypodermis, neurons and body muscles.

It catalyses the reaction L-seryl-[protein] + ATP = O-phospho-L-seryl-[protein] + ADP + H(+). It carries out the reaction L-threonyl-[protein] + ATP = O-phospho-L-threonyl-[protein] + ADP + H(+). Its activity is regulated as follows. Activated by phosphorylation at Ser-355. May be activated by svh-2-mediated phosphorylation. In terms of biological role, serine/threonine-protein kinase which, by phosphorylating and activating mek-1, plays an important role in the activation of the JNK pathway composed of mlk-1, mek-1 and kgb-1. Involved in the response to environmental stress such as heavy metals. By activating the JNK pathway downstream of tyrosine receptor svh-2, plays a role in axon regeneration after injury. In Caenorhabditis elegans, this protein is Mitogen-activated protein kinase kinase kinase mlk-1.